Consider the following 291-residue polypeptide: Small ribosomal subunit biogenesis GTPase RsgA (291 aa).

Positions N63–L221 constitute a CP-type G domain. Residues T112 to D115 and G164 to T172 each bind GTP. Zn(2+) contacts are provided by C245, C250, H252, and C258.

The protein belongs to the TRAFAC class YlqF/YawG GTPase family. RsgA subfamily. In terms of assembly, monomer. Associates with 30S ribosomal subunit, binds 16S rRNA. Zn(2+) is required as a cofactor.

It localises to the cytoplasm. In terms of biological role, one of several proteins that assist in the late maturation steps of the functional core of the 30S ribosomal subunit. Helps release RbfA from mature subunits. May play a role in the assembly of ribosomal proteins into the subunit. Circularly permuted GTPase that catalyzes slow GTP hydrolysis, GTPase activity is stimulated by the 30S ribosomal subunit. The polypeptide is Small ribosomal subunit biogenesis GTPase RsgA (Staphylococcus epidermidis (strain ATCC 12228 / FDA PCI 1200)).